A 145-amino-acid polypeptide reads, in one-letter code: Large ribosomal subunit protein uL11 (145 aa).

This sequence belongs to the universal ribosomal protein uL11 family. Part of the ribosomal stalk of the 50S ribosomal subunit. Interacts with L10 and the large rRNA to form the base of the stalk. L10 forms an elongated spine to which L12 dimers bind in a sequential fashion forming a multimeric L10(L12)X complex. In terms of processing, one or more lysine residues are methylated.

Its function is as follows. Forms part of the ribosomal stalk which helps the ribosome interact with GTP-bound translation factors. This chain is Large ribosomal subunit protein uL11, found in Persephonella marina (strain DSM 14350 / EX-H1).